A 375-amino-acid polypeptide reads, in one-letter code: MVDANMGAAGGQFPEFPNIVTHGGQYVQYDIFGNFFEITTKYRPPIMPIGRGAYGIVCSVFNAELNEMVAVKKIANAFDNYMDAKRTLREIKLLRHLDHENVIGLRDVIPPPLRREFSDVYIATELMDTDLHQIIRSNQGLSEDHCQYFMYQLLRGLKYIHSANVIHRDLKPSNLLLNANCDLKICDFGLARPNLENENMTEYVVTRWYRAPELLLNSSDYTEAIDVWSVGCIFMELMNRKPLFAGKDHVHQIRLLTELLGTPTESDLSFLRNEDAKRYIRQLPQHPRQQLAKVFPHVNSLAIELVDKMLTLNPTGRITVEEALAHPYLAKLHDAADEPVCPVPFSFDFEQQGIGEEQIKDMIYQEALVLNPEYA.

The region spanning 43-329 (RPPIMPIGRG…VEEALAHPYL (287 aa)) is the Protein kinase domain. ATP-binding positions include 49–57 (IGRGAYGIV) and Lys-72. Asp-169 functions as the Proton acceptor in the catalytic mechanism. The residue at position 201 (Thr-201) is a Phosphothreonine. The short motif at 201 to 203 (TEY) is the TXY element. Tyr-203 is modified (phosphotyrosine). Residue Thr-206 is modified to Phosphothreonine.

The protein belongs to the protein kinase superfamily. CMGC Ser/Thr protein kinase family. MAP kinase subfamily. The cofactor is Mg(2+). In terms of processing, activated by wounding and UV-C in a cultivar-dependent manner; phosphorylated in cv. Pungchon but not in cv. Subicho.

It carries out the reaction L-seryl-[protein] + ATP = O-phospho-L-seryl-[protein] + ADP + H(+). The enzyme catalyses L-threonyl-[protein] + ATP = O-phospho-L-threonyl-[protein] + ADP + H(+). Its activity is regulated as follows. Activated by threonine and tyrosine phosphorylation. Stress-inducible protein kinase involved in oxidative stress-mediated and innate immune MAP kinase signaling cascades. The protein is Mitogen-activated protein kinase 1 of Capsicum annuum (Capsicum pepper).